The chain runs to 502 residues: Lysine--tRNA ligase (502 aa).

Positions 403 and 410 each coordinate Mg(2+).

The protein belongs to the class-II aminoacyl-tRNA synthetase family. As to quaternary structure, homodimer. It depends on Mg(2+) as a cofactor.

It is found in the cytoplasm. It carries out the reaction tRNA(Lys) + L-lysine + ATP = L-lysyl-tRNA(Lys) + AMP + diphosphate. In Synechococcus sp. (strain CC9902), this protein is Lysine--tRNA ligase.